Reading from the N-terminus, the 551-residue chain is Trigger factor (551 aa).

The 86-residue stretch at 165-250 folds into the PPIase FKBP-type domain; sequence GDLVVLDFAG…ATDVRVPGET (86 aa). The tract at residues 442 to 551 is disordered; the sequence is ADDDTIGKGH…APAKKKAAAE (110 aa). Positions 458–472 are enriched in basic and acidic residues; it reads GHDHHDHDHDHDHAA. Over residues 513-541 the composition is skewed to low complexity; it reads EAAPAPKKAPAKKAAAAKAEEAPAAAPKK. Residues 542-551 show a composition bias toward basic residues; that stretch reads APAKKKAAAE.

The protein belongs to the FKBP-type PPIase family. Tig subfamily.

The protein localises to the cytoplasm. The catalysed reaction is [protein]-peptidylproline (omega=180) = [protein]-peptidylproline (omega=0). Its function is as follows. Involved in protein export. Acts as a chaperone by maintaining the newly synthesized protein in an open conformation. Functions as a peptidyl-prolyl cis-trans isomerase. In Rhizorhabdus wittichii (strain DSM 6014 / CCUG 31198 / JCM 15750 / NBRC 105917 / EY 4224 / RW1) (Sphingomonas wittichii), this protein is Trigger factor.